A 107-amino-acid chain; its full sequence is Small ribosomal subunit protein uS17 (107 aa).

The protein belongs to the universal ribosomal protein uS17 family. Part of the 30S ribosomal subunit.

In terms of biological role, one of the primary rRNA binding proteins, it binds specifically to the 5'-end of 16S ribosomal RNA. The chain is Small ribosomal subunit protein uS17 from Nitrosopumilus maritimus (strain SCM1).